The chain runs to 380 residues: Cytochrome b (380 aa).

4 consecutive transmembrane segments (helical) span residues Phe-34–Met-54, Trp-78–Ile-99, Trp-114–Leu-134, and Phe-179–Thr-199. Residues His-84 and His-98 each contribute to the heme b site. Heme b-binding residues include His-183 and His-197. A ubiquinone is bound at residue His-202. The next 4 membrane-spanning stretches (helical) occupy residues Leu-227–Ser-247, Leu-289–His-309, Leu-321–Ser-341, and Phe-348–Pro-368.

The protein belongs to the cytochrome b family. As to quaternary structure, the cytochrome bc1 complex contains 11 subunits: 3 respiratory subunits (MT-CYB, CYC1 and UQCRFS1), 2 core proteins (UQCRC1 and UQCRC2) and 6 low-molecular weight proteins (UQCRH/QCR6, UQCRB/QCR7, UQCRQ/QCR8, UQCR10/QCR9, UQCR11/QCR10 and a cleavage product of UQCRFS1). This cytochrome bc1 complex then forms a dimer. Heme b serves as cofactor.

Its subcellular location is the mitochondrion inner membrane. In terms of biological role, component of the ubiquinol-cytochrome c reductase complex (complex III or cytochrome b-c1 complex) that is part of the mitochondrial respiratory chain. The b-c1 complex mediates electron transfer from ubiquinol to cytochrome c. Contributes to the generation of a proton gradient across the mitochondrial membrane that is then used for ATP synthesis. The polypeptide is Cytochrome b (MT-CYB) (Pelagodroma marina (White-faced storm-petrel)).